A 77-amino-acid polypeptide reads, in one-letter code: UPF0291 protein EAT1b_0405 (77 aa).

A disordered region spans residues 53–77 (KVVDPDGNDVTPEKLKEDQKRYRGE). The span at 63 to 77 (TPEKLKEDQKRYRGE) shows a compositional bias: basic and acidic residues.

It belongs to the UPF0291 family.

The protein resides in the cytoplasm. This is UPF0291 protein EAT1b_0405 from Exiguobacterium sp. (strain ATCC BAA-1283 / AT1b).